The chain runs to 466 residues: Cytochrome P450 85A (466 aa).

The chain crosses the membrane as a helical span at residues 2-22 (ALFMAILGVLVLLLCLCSALL). Residue C414 participates in heme binding.

It belongs to the cytochrome P450 family. The cofactor is heme.

The protein localises to the membrane. Functionally, catalyzes the C6-oxidation step in brassinosteroids biosynthesis. The sequence is that of Cytochrome P450 85A from Phaseolus vulgaris (Kidney bean).